The following is a 551-amino-acid chain: Preprotein translocase subunit SCY1, chloroplastic (551 aa).

The N-terminal 67 residues, 1 to 67 (MITVSEVSSY…WNLGLVINSR (67 aa)), are a transit peptide targeting the chloroplast. The next 10 membrane-spanning stretches (helical) occupy residues 142–162 (FLKL…PLGG), 192–212 (LGIC…FQLL), 241–261 (ASVG…RPYV), 268–288 (WVVS…YIGE), 295–315 (LGNG…PASF), 328–348 (YTGL…IVYV), 382–402 (SAGV…ATLA), 415–435 (FALT…IAFF), 482–502 (VLGS…EQIT), and 503–523 (HLTA…GCAT).

The protein belongs to the SecY/SEC61-alpha family. In terms of assembly, part of the Sec protein translocation apparatus. Interacts with SECE1, ALB3 and probably with SECA1.

The protein resides in the plastid. The protein localises to the chloroplast thylakoid membrane. Involved in protein export. Probably interacts with other proteins to allow the translocation of proteins across the chloroplast thylakoid membranes. Required for normal greening during embryogenesis. Central subunit of the protein translocation channel SecYE. Consists of two halves formed by TMs 1-5 and 6-10. These two domains form a lateral gate at the front which open onto the bilayer between TMs 2 and 7, and are clamped together by SecE at the back. The channel is closed by both a pore ring composed of hydrophobic SecY resides and a short helix (helix 2A) on the extracellular side of the membrane which forms a plug. This is Preprotein translocase subunit SCY1, chloroplastic (SCY1) from Arabidopsis thaliana (Mouse-ear cress).